A 415-amino-acid polypeptide reads, in one-letter code: MDVSTQTRHATYFQDENQLQKDHIYVKKKSHIKLNTGVRAPFKAVDNINQQDEPTLIEGNNESSISSSTGDTFEEDFAYQDKVEIEERSIRSTPKSIGDDDLENREGSFDAPEGILTHGKHRLPTIPEWTKEDLAALSEAAARLQANPSPEDIETDPSMVPDYDPEIFHYMQSLERKLAPPPNYMSVQQEIDWVTRHMLVDWIVQVQIHFRLLPETLFLAVNLIDRFLSIKVVSLQKVQLVGLSALLIACKYEEIHPPSIYNFAHVVQGIFTVDEIIRAERYMLMLLDFDISWPGPMSFLRRISRADSYDHDIRMLAKYLQEVTLMDEIFIGAHISFIAATAYYLSMQMLGHLDWTPCHVYYSGYTARQLKPCAIIIMECLVDAPNHHNAIYRKYSENRMKRVSAFAHNWVLSVI.

2 disordered regions span residues proline 54–glutamate 74 and glutamate 86–histidine 118. Residues isoleucine 57–aspartate 71 are compositionally biased toward low complexity. Residue serine 96 is modified to Phosphoserine.

It belongs to the cyclin family. Cyclin G subfamily.

In terms of biological role, required for efficient passage of the G1/S transition. This is G2/mitotic-specific cyclin cig1 (cig1) from Schizosaccharomyces pombe (strain 972 / ATCC 24843) (Fission yeast).